We begin with the raw amino-acid sequence, 491 residues long: Feruloyl-CoA synthase (491 aa).

T154 is a binding site for Mg(2+). Positions 199, 291, and 295 each coordinate ATP. Mg(2+) is bound at residue E296. D374 and K391 together coordinate ATP.

This sequence belongs to the ATP-dependent AMP-binding enzyme family. Mg(2+) is required as a cofactor.

The catalysed reaction is (E)-ferulate + ATP + CoA = (E)-feruloyl-CoA + AMP + diphosphate. In terms of biological role, catalyzes the formation of (E)-feruloyl-CoA, AMP and diphosphate from (E)-ferulate, CoA and ATP. Involved in the degradation pathway of lignin-derived aromatic compounds of plant cell walls. Catalyzes the first enzymatic step in the conversion of ferulic acid into high value compound vanillin. This Amycolatopsis sp protein is Feruloyl-CoA synthase.